A 145-amino-acid polypeptide reads, in one-letter code: Leptin (145 aa).

The cysteines at positions 95 and 145 are disulfide-linked.

It belongs to the leptin family.

The protein localises to the secreted. In terms of biological role, key player in the regulation of energy balance and body weight control. Once released into the circulation, has central and peripheral effects by binding LEPR, found in many tissues, which results in the activation of several major signaling pathways. The polypeptide is Leptin (LEP) (Meleagris gallopavo (Wild turkey)).